Reading from the N-terminus, the 347-residue chain is Lipoyl synthase (347 aa).

Cys55, Cys60, Cys66, Cys81, Cys85, Cys88, and Ser292 together coordinate [4Fe-4S] cluster. Residues 67 to 281 form the Radical SAM core domain; it reads WEDREATFLI…RDYGHDIGFA (215 aa).

Belongs to the radical SAM superfamily. Lipoyl synthase family. It depends on [4Fe-4S] cluster as a cofactor.

It localises to the cytoplasm. The catalysed reaction is [[Fe-S] cluster scaffold protein carrying a second [4Fe-4S](2+) cluster] + N(6)-octanoyl-L-lysyl-[protein] + 2 oxidized [2Fe-2S]-[ferredoxin] + 2 S-adenosyl-L-methionine + 4 H(+) = [[Fe-S] cluster scaffold protein] + N(6)-[(R)-dihydrolipoyl]-L-lysyl-[protein] + 4 Fe(3+) + 2 hydrogen sulfide + 2 5'-deoxyadenosine + 2 L-methionine + 2 reduced [2Fe-2S]-[ferredoxin]. The protein operates within protein modification; protein lipoylation via endogenous pathway; protein N(6)-(lipoyl)lysine from octanoyl-[acyl-carrier-protein]: step 2/2. Functionally, catalyzes the radical-mediated insertion of two sulfur atoms into the C-6 and C-8 positions of the octanoyl moiety bound to the lipoyl domains of lipoate-dependent enzymes, thereby converting the octanoylated domains into lipoylated derivatives. The polypeptide is Lipoyl synthase (Corynebacterium kroppenstedtii (strain DSM 44385 / JCM 11950 / CIP 105744 / CCUG 35717)).